The primary structure comprises 127 residues: UPF0166 protein PH1503 (127 aa).

It belongs to the UPF0166 family.

The sequence is that of UPF0166 protein PH1503 from Pyrococcus horikoshii (strain ATCC 700860 / DSM 12428 / JCM 9974 / NBRC 100139 / OT-3).